We begin with the raw amino-acid sequence, 142 residues long: Large ribosomal subunit protein uL11 (142 aa).

This sequence belongs to the universal ribosomal protein uL11 family. In terms of assembly, part of the ribosomal stalk of the 50S ribosomal subunit. Interacts with L10 and the large rRNA to form the base of the stalk. L10 forms an elongated spine to which L12 dimers bind in a sequential fashion forming a multimeric L10(L12)X complex. One or more lysine residues are methylated.

Forms part of the ribosomal stalk which helps the ribosome interact with GTP-bound translation factors. The chain is Large ribosomal subunit protein uL11 from Sinorhizobium medicae (strain WSM419) (Ensifer medicae).